Reading from the N-terminus, the 105-residue chain is Integration host factor subunit alpha (105 aa).

Belongs to the bacterial histone-like protein family. In terms of assembly, heterodimer of an alpha and a beta chain.

Its function is as follows. This protein is one of the two subunits of integration host factor, a specific DNA-binding protein that functions in genetic recombination as well as in transcriptional and translational control. In Rhodospirillum rubrum (strain ATCC 11170 / ATH 1.1.1 / DSM 467 / LMG 4362 / NCIMB 8255 / S1), this protein is Integration host factor subunit alpha.